Consider the following 688-residue polypeptide: Nucleolar protein 10 (688 aa).

Met-1 carries the post-translational modification N-acetylmethionine. Residue Ser-25 is modified to Phosphoserine. 7 WD repeats span residues 44–82 (ELIQ…CYDT), 88–124 (KFER…FHSQ), 127–163 (FYYK…RLNL), 170–205 (NPLQ…CWDP), 219–258 (NSVT…LYDL), 262–300 (KPLL…MWNK), and 304–341 (KIFT…IYYI). Residues 423–446 (EYRKDKIRQKIEETRAQRVQLKKL) adopt a coiled-coil conformation. Residue Ser-475 is modified to Phosphoserine. At Thr-481 the chain carries Phosphothreonine. Ser-514 carries the post-translational modification Phosphoserine. Coiled coils occupy residues 514–589 (SEKR…TVLK) and 640–673 (SKQL…LRRS). Disordered stretches follow at residues 529–557 (LREK…EKAW) and 645–688 (FTLK…RSFH). The segment covering 648 to 663 (KRSEQQKKQQEAEKLH) has biased composition (basic and acidic residues). The span at 664-688 (RQERKRLRRSAGHLKSRHKRGRSFH) shows a compositional bias: basic residues.

It belongs to the WD repeat NOL10/ENP2 family.

Its subcellular location is the nucleus. It is found in the nucleolus. The chain is Nucleolar protein 10 (NOL10) from Homo sapiens (Human).